The chain runs to 76 residues: uncharacterized protein (76 aa).

EF-hand domains are found at residues 9-44 (EMDE…LGEN) and 43-76 (ENLT…IHIS).

Its subcellular location is the cytoplasm. It is found in the nucleus. This is an uncharacterized protein from Schizosaccharomyces pombe (strain 972 / ATCC 24843) (Fission yeast).